Here is a 123-residue protein sequence, read N- to C-terminus: MADPSPEIKAVARYIRMSPYKVRRVLNQIRGRTYADALILLEFMPYAACEPVRKVLRSAVANAEHNNGLDPRDLVISKAYADQGPTLKRFRPRAQGRAYPIRKRTCHITIAVRPIEPEAATAS.

This sequence belongs to the universal ribosomal protein uL22 family. As to quaternary structure, part of the 50S ribosomal subunit.

In terms of biological role, this protein binds specifically to 23S rRNA; its binding is stimulated by other ribosomal proteins, e.g. L4, L17, and L20. It is important during the early stages of 50S assembly. It makes multiple contacts with different domains of the 23S rRNA in the assembled 50S subunit and ribosome. Its function is as follows. The globular domain of the protein is located near the polypeptide exit tunnel on the outside of the subunit, while an extended beta-hairpin is found that lines the wall of the exit tunnel in the center of the 70S ribosome. The polypeptide is Large ribosomal subunit protein uL22 (Synechococcus sp. (strain JA-3-3Ab) (Cyanobacteria bacterium Yellowstone A-Prime)).